A 589-amino-acid chain; its full sequence is ATP-dependent lipid A-core flippase (589 aa).

6 consecutive transmembrane segments (helical) span residues 37–57 (ALAIGATIVASATEPFVPALL), 72–92 (LWLVPLALMLLFTVRGLSGFL), 151–171 (IMKLARDVLTLLALIGYLVYL), 173–193 (WKLMLVVALLFPAVAFVIQVL), 260–280 (SAITQVLAAMALSAVISIALL), and 286–306 (TTTVGGFVAFVTAMLLLIAPV). The ABC transmembrane type-1 domain maps to 37-318 (ALAIGATIVA…LSDAATPVTR (282 aa)). Residues 350 to 584 (IEFADVSVIY…NGAYAHLYRL (235 aa)) enclose the ABC transporter domain. 384 to 391 (GASGSGKT) contributes to the ATP binding site.

Belongs to the ABC transporter superfamily. Lipid exporter (TC 3.A.1.106) family. In terms of assembly, homodimer.

Its subcellular location is the cell inner membrane. It carries out the reaction ATP + H2O + lipid A-core oligosaccharideSide 1 = ADP + phosphate + lipid A-core oligosaccharideSide 2.. Involved in lipopolysaccharide (LPS) biosynthesis. Translocates lipid A-core from the inner to the outer leaflet of the inner membrane. Transmembrane domains (TMD) form a pore in the inner membrane and the ATP-binding domain (NBD) is responsible for energy generation. The chain is ATP-dependent lipid A-core flippase from Polaromonas sp. (strain JS666 / ATCC BAA-500).